We begin with the raw amino-acid sequence, 1263 residues long: DNA-directed RNA polymerase subunit beta (1263 aa).

It belongs to the RNA polymerase beta chain family. The RNAP catalytic core consists of 2 alpha, 1 beta, 1 beta' and 1 omega subunit. When a sigma factor is associated with the core the holoenzyme is formed, which can initiate transcription.

The catalysed reaction is RNA(n) + a ribonucleoside 5'-triphosphate = RNA(n+1) + diphosphate. Its function is as follows. DNA-dependent RNA polymerase catalyzes the transcription of DNA into RNA using the four ribonucleoside triphosphates as substrates. The chain is DNA-directed RNA polymerase subunit beta from Thermotoga sp. (strain RQ2).